The following is a 226-amino-acid chain: Ornithine decarboxylase antizyme (226 aa).

It belongs to the ODC antizyme family. As to quaternary structure, interacts with ODC and thereby sterically blocks ODC homodimerization.

In terms of biological role, ornithine decarboxylase (ODC) antizyme protein that negatively regulates ODC activity and intracellular polyamine biosynthesis in response to increased intracellular polyamine levels. Binds to ODC monomers, inhibiting the assembly of the functional ODC homodimer, and targets the monomers for ubiquitin-independent proteolytic destruction by the 26S proteasome. The chain is Ornithine decarboxylase antizyme (spa1) from Schizosaccharomyces pombe (strain 972 / ATCC 24843) (Fission yeast).